The primary structure comprises 256 residues: Imidazole glycerol phosphate synthase subunit HisF (256 aa).

Catalysis depends on residues aspartate 11 and aspartate 130.

It belongs to the HisA/HisF family. Heterodimer of HisH and HisF.

It localises to the cytoplasm. It carries out the reaction 5-[(5-phospho-1-deoxy-D-ribulos-1-ylimino)methylamino]-1-(5-phospho-beta-D-ribosyl)imidazole-4-carboxamide + L-glutamine = D-erythro-1-(imidazol-4-yl)glycerol 3-phosphate + 5-amino-1-(5-phospho-beta-D-ribosyl)imidazole-4-carboxamide + L-glutamate + H(+). It participates in amino-acid biosynthesis; L-histidine biosynthesis; L-histidine from 5-phospho-alpha-D-ribose 1-diphosphate: step 5/9. Its function is as follows. IGPS catalyzes the conversion of PRFAR and glutamine to IGP, AICAR and glutamate. The HisF subunit catalyzes the cyclization activity that produces IGP and AICAR from PRFAR using the ammonia provided by the HisH subunit. The chain is Imidazole glycerol phosphate synthase subunit HisF from Cupriavidus taiwanensis (strain DSM 17343 / BCRC 17206 / CCUG 44338 / CIP 107171 / LMG 19424 / R1) (Ralstonia taiwanensis (strain LMG 19424)).